Consider the following 215-residue polypeptide: Cytochrome b6 (215 aa).

Residues Ile-32–Phe-52 traverse the membrane as a helical segment. Residue Cys-35 participates in heme c binding. Residues His-86 and His-100 each coordinate heme b. 3 helical membrane passes run Ala-90 to Phe-110, Leu-116 to Tyr-136, and Leu-186 to Ile-206. Heme b-binding residues include His-187 and His-202.

This sequence belongs to the cytochrome b family. PetB subfamily. As to quaternary structure, the 4 large subunits of the cytochrome b6-f complex are cytochrome b6, subunit IV (17 kDa polypeptide, PetD), cytochrome f and the Rieske protein, while the 4 small subunits are PetG, PetL, PetM and PetN. The complex functions as a dimer. Requires heme b as cofactor. Heme c serves as cofactor.

The protein resides in the plastid. The protein localises to the chloroplast thylakoid membrane. Its function is as follows. Component of the cytochrome b6-f complex, which mediates electron transfer between photosystem II (PSII) and photosystem I (PSI), cyclic electron flow around PSI, and state transitions. The chain is Cytochrome b6 from Liriodendron tulipifera (Tuliptree).